The following is a 353-amino-acid chain: DNA integrity scanning protein DisA (353 aa).

Residues 6-144 (DKELMNILKI…GGIKYVLRDS (139 aa)) enclose the DAC domain. ATP-binding positions include G73, L91, and 104-108 (TRHRT).

The protein belongs to the DisA family. In terms of assembly, homooctamer. Mg(2+) is required as a cofactor.

The enzyme catalyses 2 ATP = 3',3'-c-di-AMP + 2 diphosphate. In terms of biological role, participates in a DNA-damage check-point that is active prior to asymmetric division when DNA is damaged. DisA forms globular foci that rapidly scan along the chromosomes during sporulation, searching for lesions. When a lesion is present, DisA pauses at the lesion site. This triggers a cellular response that culminates in a temporary block in sporulation initiation. Functionally, also has diadenylate cyclase activity, catalyzing the condensation of 2 ATP molecules into cyclic di-AMP (c-di-AMP). c-di-AMP acts as a signaling molecule that couples DNA integrity with progression of sporulation. The rise in c-di-AMP level generated by DisA while scanning the chromosome, operates as a positive signal that advances sporulation; upon encountering a lesion, the DisA focus arrests at the damaged site and halts c-di-AMP synthesis. This chain is DNA integrity scanning protein DisA, found in Clostridium botulinum (strain Kyoto / Type A2).